The following is a 154-amino-acid chain: NADPH-dependent 7-cyano-7-deazaguanine reductase (154 aa).

Residues 1-11 (MAKKPVKDLKQ) show a composition bias toward basic and acidic residues. The interval 1 to 31 (MAKKPVKDLKQLGHATPVPASPEEATLERVP) is disordered. The active-site Thioimide intermediate is the Cys-52. The Proton donor role is filled by Asp-59. Residues 74–76 (IES) and 93–94 (HE) each bind substrate.

Belongs to the GTP cyclohydrolase I family. QueF type 1 subfamily.

Its subcellular location is the cytoplasm. The enzyme catalyses 7-aminomethyl-7-carbaguanine + 2 NADP(+) = 7-cyano-7-deazaguanine + 2 NADPH + 3 H(+). Its pathway is tRNA modification; tRNA-queuosine biosynthesis. Its function is as follows. Catalyzes the NADPH-dependent reduction of 7-cyano-7-deazaguanine (preQ0) to 7-aminomethyl-7-deazaguanine (preQ1). This chain is NADPH-dependent 7-cyano-7-deazaguanine reductase, found in Parvibaculum lavamentivorans (strain DS-1 / DSM 13023 / NCIMB 13966).